The primary structure comprises 267 residues: Phosphate import ATP-binding protein PstB (267 aa).

The region spanning 21–262 is the ABC transporter domain; sequence VAARNLDFYY…PSKQQTEDYI (242 aa). An ATP-binding site is contributed by 53 to 60; the sequence is GPSGCGKS.

This sequence belongs to the ABC transporter superfamily. Phosphate importer (TC 3.A.1.7) family. The complex is composed of two ATP-binding proteins (PstB), two transmembrane proteins (PstC and PstA) and a solute-binding protein (PstS).

Its subcellular location is the cell inner membrane. The catalysed reaction is phosphate(out) + ATP + H2O = ADP + 2 phosphate(in) + H(+). Part of the ABC transporter complex PstSACB involved in phosphate import. Responsible for energy coupling to the transport system. In Xanthomonas axonopodis pv. citri (strain 306), this protein is Phosphate import ATP-binding protein PstB.